A 245-amino-acid chain; its full sequence is tRNA (guanine-N(7)-)-methyltransferase (245 aa).

S-adenosyl-L-methionine contacts are provided by Glu-75, Glu-100, Asp-127, and Asp-150. Asp-150 is a catalytic residue. Residues Lys-154, Asp-186, and 223–226 contribute to the substrate site; that span reads TKFE.

Belongs to the class I-like SAM-binding methyltransferase superfamily. TrmB family.

It carries out the reaction guanosine(46) in tRNA + S-adenosyl-L-methionine = N(7)-methylguanosine(46) in tRNA + S-adenosyl-L-homocysteine. It participates in tRNA modification; N(7)-methylguanine-tRNA biosynthesis. Catalyzes the formation of N(7)-methylguanine at position 46 (m7G46) in tRNA. This is tRNA (guanine-N(7)-)-methyltransferase from Photobacterium profundum (strain SS9).